Consider the following 174-residue polypeptide: Cytochrome c-type biogenesis protein CcmE (174 aa).

Residues 1–8 (MNPRRKSR) lie on the Cytoplasmic side of the membrane. Residues 9–29 (LSVVLFIFLGISVASALVLYA) traverse the membrane as a helical; Signal-anchor for type II membrane protein segment. Topologically, residues 30 to 174 (LRQNIDLFYT…QEKQFKEGNQ (145 aa)) are periplasmic. Positions 131 and 135 each coordinate heme. The interval 149 to 174 (KPMGISDLKNESDRDRQEKQFKEGNQ) is disordered. The segment covering 156–174 (LKNESDRDRQEKQFKEGNQ) has biased composition (basic and acidic residues).

Belongs to the CcmE/CycJ family.

It localises to the cell inner membrane. Its function is as follows. Heme chaperone required for the biogenesis of c-type cytochromes. Transiently binds heme delivered by CcmC and transfers the heme to apo-cytochromes in a process facilitated by CcmF and CcmH. In Histophilus somni (strain 129Pt) (Haemophilus somnus), this protein is Cytochrome c-type biogenesis protein CcmE.